The primary structure comprises 330 residues: Aspartate--ammonia ligase (330 aa).

Belongs to the class-II aminoacyl-tRNA synthetase family. AsnA subfamily.

The protein resides in the cytoplasm. The enzyme catalyses L-aspartate + NH4(+) + ATP = L-asparagine + AMP + diphosphate + H(+). Its pathway is amino-acid biosynthesis; L-asparagine biosynthesis; L-asparagine from L-aspartate (ammonia route): step 1/1. The chain is Aspartate--ammonia ligase from Streptococcus agalactiae serotype Ia (strain ATCC 27591 / A909 / CDC SS700).